The primary structure comprises 501 residues: L-arabinose isomerase (501 aa).

Residues glutamate 306, glutamate 333, histidine 350, and histidine 449 each contribute to the Mn(2+) site.

Belongs to the arabinose isomerase family. Mn(2+) is required as a cofactor.

The enzyme catalyses beta-L-arabinopyranose = L-ribulose. The protein operates within carbohydrate degradation; L-arabinose degradation via L-ribulose; D-xylulose 5-phosphate from L-arabinose (bacterial route): step 1/3. Functionally, catalyzes the conversion of L-arabinose to L-ribulose. The polypeptide is L-arabinose isomerase (Herpetosiphon aurantiacus (strain ATCC 23779 / DSM 785 / 114-95)).